We begin with the raw amino-acid sequence, 166 residues long: NAD(P)H-quinone oxidoreductase subunit I, chloroplastic (166 aa).

2 4Fe-4S ferredoxin-type domains span residues G55 to K84 and L95 to E124. The [4Fe-4S] cluster site is built by C64, C67, C70, C74, C104, C107, C110, and C114.

It belongs to the complex I 23 kDa subunit family. In terms of assembly, NDH is composed of at least 16 different subunits, 5 of which are encoded in the nucleus. [4Fe-4S] cluster is required as a cofactor.

The protein resides in the plastid. The protein localises to the chloroplast thylakoid membrane. It carries out the reaction a plastoquinone + NADH + (n+1) H(+)(in) = a plastoquinol + NAD(+) + n H(+)(out). The enzyme catalyses a plastoquinone + NADPH + (n+1) H(+)(in) = a plastoquinol + NADP(+) + n H(+)(out). Its function is as follows. NDH shuttles electrons from NAD(P)H:plastoquinone, via FMN and iron-sulfur (Fe-S) centers, to quinones in the photosynthetic chain and possibly in a chloroplast respiratory chain. The immediate electron acceptor for the enzyme in this species is believed to be plastoquinone. Couples the redox reaction to proton translocation, and thus conserves the redox energy in a proton gradient. The polypeptide is NAD(P)H-quinone oxidoreductase subunit I, chloroplastic (Chaenactis santolinoides (Santolina pincushion)).